Consider the following 854-residue polypeptide: Armadillo repeat-containing protein 2 (854 aa).

3 disordered regions span residues 1-116 (MLSS…SFPK), 140-194 (QGML…PLLT), and 206-255 (EVSL…ETDT). Residues 58 to 73 (PASSRSPENRPPSSFS) are compositionally biased toward low complexity. Polar residues-rich tracts occupy residues 74–87 (LHASSFELSDSKPI) and 162–187 (KPVSVGSSTARRNGTHLTASSATGQL). 12 ARM repeats span residues 255–294 (TEVDEVFWKARIVPILHELENEEDIEEMCAACTQLHRTLE), 298–337 (MLGKKFKRRTVLLKALYKLVDADSDPLSLKLAKLILALKV), 356–396 (EKND…ALKF), 401–442 (PGFL…HLLV), 455–496 (PLTR…KLTS), 499–540 (DCCA…NLTA), 544–583 (QARELFSRETGSVETLLTLFQSFYHHKENSPKLQLSEAKP), 585–605 (AEAEDVLVKLTRVLANIAIHP), 606–649 (RIGP…NLSF), 651–692 (QVKS…NLSQ), 694–733 (HDVCNFLMQKNVHKFMITLLEAKHQDICFSACGVLLNLTV), and 735–777 (KEKR…NFSE).

Required for sperm flagellum axoneme organization and function. Involved in axonemal central pair complex assembly and/or stability. The polypeptide is Armadillo repeat-containing protein 2 (Mus musculus (Mouse)).